The primary structure comprises 255 residues: 4-diphosphocytidyl-2-C-methyl-D-erythritol kinase (255 aa).

The active site involves lysine 6. 95 to 105 (PVCAGLGGGSS) is a binding site for ATP. Aspartate 137 is an active-site residue.

Belongs to the GHMP kinase family. IspE subfamily.

The catalysed reaction is 4-CDP-2-C-methyl-D-erythritol + ATP = 4-CDP-2-C-methyl-D-erythritol 2-phosphate + ADP + H(+). It functions in the pathway isoprenoid biosynthesis; isopentenyl diphosphate biosynthesis via DXP pathway; isopentenyl diphosphate from 1-deoxy-D-xylulose 5-phosphate: step 3/6. Catalyzes the phosphorylation of the position 2 hydroxy group of 4-diphosphocytidyl-2C-methyl-D-erythritol. In Campylobacter jejuni subsp. jejuni serotype O:6 (strain 81116 / NCTC 11828), this protein is 4-diphosphocytidyl-2-C-methyl-D-erythritol kinase.